We begin with the raw amino-acid sequence, 815 residues long: Cilia- and flagella-associated protein 251 (815 aa).

WD repeat units follow at residues Gly58 to Thr99, Pro103 to Glu148, Pro166 to Gln205, Gln218 to Gly257, Ile271 to Phe308, Ser379 to Gly418, Ala420 to Val460, Asn463 to Arg502, Ser511 to Gly553, and Ser573 to Ser612.

As to quaternary structure, identified in a spoke-associated complex containing CFAP61, CFAP91 and CFAP251; the complex is associated with the radial spokes in the axoneme. The complex associates with Calmodulin; the association is calcium sensitive.

The protein localises to the cytoplasm. It localises to the cytoskeleton. The protein resides in the flagellum axoneme. As component of a spoke-associated complex, regulates flagellar dynein activity by mediating regulatory signals between the radial spokes and dynein arms. This chain is Cilia- and flagella-associated protein 251, found in Chlamydomonas reinhardtii (Chlamydomonas smithii).